A 516-amino-acid polypeptide reads, in one-letter code: D-alanine--D-alanyl carrier protein ligase (516 aa).

156-157 (TS) is a binding site for ATP. Aspartate 203 serves as a coordination point for D-alanine. 298-303 (NAYGPT) provides a ligand contact to ATP. Valine 307 contributes to the D-alanine binding site. ATP contacts are provided by residues aspartate 389, 401-404 (YGGR), and lysine 503. Lysine 503 provides a ligand contact to D-alanine.

The protein belongs to the ATP-dependent AMP-binding enzyme family. DltA subfamily.

The protein resides in the cytoplasm. The enzyme catalyses holo-[D-alanyl-carrier protein] + D-alanine + ATP = D-alanyl-[D-alanyl-carrier protein] + AMP + diphosphate. The protein operates within cell wall biogenesis; lipoteichoic acid biosynthesis. In terms of biological role, catalyzes the first step in the D-alanylation of lipoteichoic acid (LTA), the activation of D-alanine and its transfer onto the D-alanyl carrier protein (Dcp) DltC. In an ATP-dependent two-step reaction, forms a high energy D-alanyl-AMP intermediate, followed by transfer of the D-alanyl residue as a thiol ester to the phosphopantheinyl prosthetic group of the Dcp. D-alanylation of LTA plays an important role in modulating the properties of the cell wall in Gram-positive bacteria, influencing the net charge of the cell wall. This is D-alanine--D-alanyl carrier protein ligase from Streptococcus pneumoniae serotype 4 (strain ATCC BAA-334 / TIGR4).